The following is a 65-amino-acid chain: Trypsin inhibitor (65 aa).

In terms of assembly, homotrimer.

In Zea mays (Maize), this protein is Trypsin inhibitor.